Here is a 321-residue protein sequence, read N- to C-terminus: uncharacterized protein (321 aa).

Belongs to the NAD(P)-dependent epimerase/dehydratase family.

This is an uncharacterized protein from Staphylococcus aureus (strain bovine RF122 / ET3-1).